The sequence spans 118 residues: Large ribosomal subunit protein uL24 (118 aa).

The protein belongs to the universal ribosomal protein uL24 family. Part of the 50S ribosomal subunit.

Functionally, one of two assembly initiator proteins, it binds directly to the 5'-end of the 23S rRNA, where it nucleates assembly of the 50S subunit. One of the proteins that surrounds the polypeptide exit tunnel on the outside of the subunit. In Prochlorococcus marinus (strain MIT 9303), this protein is Large ribosomal subunit protein uL24.